The primary structure comprises 349 residues: Putative F-box/LRR-repeat protein At3g16555 (349 aa).

The 48-residue stretch at 1–48 folds into the F-box domain; that stretch reads MVLLPWELEEDILSRLPPRSLVQFRSVCKRWNALFDVKSFNKDQFARA. An LRR repeat occupies 267 to 290; the sequence is VVWISLLTLPPNNLPNLFIVCYGI.

The chain is Putative F-box/LRR-repeat protein At3g16555 from Arabidopsis thaliana (Mouse-ear cress).